A 288-amino-acid polypeptide reads, in one-letter code: 33 kDa chaperonin (288 aa).

Intrachain disulfides connect C235–C237 and C268–C271.

It belongs to the HSP33 family. Under oxidizing conditions two disulfide bonds are formed involving the reactive cysteines. Under reducing conditions zinc is bound to the reactive cysteines and the protein is inactive.

It localises to the cytoplasm. In terms of biological role, redox regulated molecular chaperone. Protects both thermally unfolding and oxidatively damaged proteins from irreversible aggregation. Plays an important role in the bacterial defense system toward oxidative stress. In Streptococcus thermophilus (strain CNRZ 1066), this protein is 33 kDa chaperonin.